A 497-amino-acid chain; its full sequence is Glycerol kinase (497 aa).

An ADP-binding site is contributed by threonine 12. Threonine 12, threonine 13, and serine 14 together coordinate ATP. Position 12 (threonine 12) interacts with sn-glycerol 3-phosphate. Residue arginine 16 participates in ADP binding. Positions 82, 83, 134, and 243 each coordinate sn-glycerol 3-phosphate. 5 residues coordinate glycerol: arginine 82, glutamate 83, tyrosine 134, aspartate 243, and glutamine 244. Residues threonine 265 and glycine 308 each contribute to the ADP site. Residues threonine 265, glycine 308, glutamine 312, and glycine 409 each contribute to the ATP site. ADP-binding residues include glycine 409 and asparagine 413.

Belongs to the FGGY kinase family. Homotetramer and homodimer (in equilibrium).

It carries out the reaction glycerol + ATP = sn-glycerol 3-phosphate + ADP + H(+). The protein operates within polyol metabolism; glycerol degradation via glycerol kinase pathway; sn-glycerol 3-phosphate from glycerol: step 1/1. Its activity is regulated as follows. Activated by phosphorylation and inhibited by fructose 1,6-bisphosphate (FBP). Key enzyme in the regulation of glycerol uptake and metabolism. Catalyzes the phosphorylation of glycerol to yield sn-glycerol 3-phosphate. This is Glycerol kinase from Thermoanaerobacter pseudethanolicus (strain ATCC 33223 / 39E) (Clostridium thermohydrosulfuricum).